The following is a 326-amino-acid chain: Transcription cofactor vestigial-like protein 3 (326 aa).

The segment at 57-80 (VTLPSKQEEEDEEEEEEEKDQPAE) is disordered. Lys-62 is covalently cross-linked (Glycyl lysine isopeptide (Lys-Gly) (interchain with G-Cter in SUMO2)). Residues 64–75 (EEEDEEEEEEEK) are compositionally biased toward acidic residues. Lys-126 is covalently cross-linked (Glycyl lysine isopeptide (Lys-Gly) (interchain with G-Cter in SUMO2)). 2 disordered regions span residues 175 to 203 (PPGT…PPAV) and 233 to 256 (HAHM…SALD). The segment covering 233-249 (HAHMHHRHRHHHHHHHP) has biased composition (basic residues).

This sequence belongs to the vestigial family. In terms of tissue distribution, enriched in placenta.

Its subcellular location is the nucleus. May act as a specific coactivator for the mammalian TEFs. This Homo sapiens (Human) protein is Transcription cofactor vestigial-like protein 3 (VGLL3).